A 520-amino-acid polypeptide reads, in one-letter code: AarF domain-containing protein kinase 1 (520 aa).

The 308-residue stretch at 148-455 folds into the Protein kinase domain; sequence EFEKTPLGAA…GTHSSSSAFF (308 aa). Residues 154–162 and Lys176 each bind ATP; that span reads LGAASLAQV. The active-site Proton acceptor is the Asp308.

It belongs to the protein kinase superfamily. ADCK protein kinase family.

Its subcellular location is the mitochondrion. Functionally, appears to be essential for maintaining mitochondrial cristae formation and mitochondrial function by acting via YME1L1 in a kinase-independent manner to regulate essential mitochondrial structural proteins OPA1 and IMMT. The action of this enzyme is not yet clear. It is not known if it has protein kinase activity and what type of substrate it would phosphorylate (Ser, Thr or Tyr). This Xenopus laevis (African clawed frog) protein is AarF domain-containing protein kinase 1 (adck1).